Consider the following 206-residue polypeptide: Cytochrome c biogenesis ATP-binding export protein CcmA (206 aa).

The region spanning 3–206 (VSVDDLCVTR…LAGASDEAFL (204 aa)) is the ABC transporter domain. 35 to 42 (GPNGSGKT) is an ATP binding site.

The protein belongs to the ABC transporter superfamily. CcmA exporter (TC 3.A.1.107) family. As to quaternary structure, the complex is composed of two ATP-binding proteins (CcmA) and two transmembrane proteins (CcmB).

Its subcellular location is the cell inner membrane. The catalysed reaction is heme b(in) + ATP + H2O = heme b(out) + ADP + phosphate + H(+). Its function is as follows. Part of the ABC transporter complex CcmAB involved in the biogenesis of c-type cytochromes; once thought to export heme, this seems not to be the case, but its exact role is uncertain. Responsible for energy coupling to the transport system. The polypeptide is Cytochrome c biogenesis ATP-binding export protein CcmA (Roseobacter denitrificans (strain ATCC 33942 / OCh 114) (Erythrobacter sp. (strain OCh 114))).